A 274-amino-acid chain; its full sequence is UPF0173 metal-dependent hydrolase AnaeK_1127 (274 aa).

This sequence belongs to the UPF0173 family.

The sequence is that of UPF0173 metal-dependent hydrolase AnaeK_1127 from Anaeromyxobacter sp. (strain K).